Consider the following 622-residue polypeptide: Phosphomethylpyrimidine synthase (622 aa).

A disordered region spans residues 109 to 130; the sequence is EPISNNNNDRQSSDKQLSFTTN. Residues Asn-234, Met-263, Tyr-292, His-328, 348-350, 389-392, and Glu-428 each bind substrate; these read SRG and DGLR. His-432 contacts Zn(2+). Residue Tyr-455 participates in substrate binding. His-496 contributes to the Zn(2+) binding site. Residues Cys-576, Cys-579, and Cys-584 each coordinate [4Fe-4S] cluster.

It belongs to the ThiC family. Homodimer. Requires [4Fe-4S] cluster as cofactor.

It catalyses the reaction 5-amino-1-(5-phospho-beta-D-ribosyl)imidazole + S-adenosyl-L-methionine = 4-amino-2-methyl-5-(phosphooxymethyl)pyrimidine + CO + 5'-deoxyadenosine + formate + L-methionine + 3 H(+). The protein operates within cofactor biosynthesis; thiamine diphosphate biosynthesis. Its function is as follows. Catalyzes the synthesis of the hydroxymethylpyrimidine phosphate (HMP-P) moiety of thiamine from aminoimidazole ribotide (AIR) in a radical S-adenosyl-L-methionine (SAM)-dependent reaction. This Baumannia cicadellinicola subsp. Homalodisca coagulata protein is Phosphomethylpyrimidine synthase.